Reading from the N-terminus, the 91-residue chain is Putative septation protein SpoVG (91 aa).

It belongs to the SpoVG family.

Functionally, could be involved in septation. The chain is Putative septation protein SpoVG from Clostridium botulinum (strain Alaska E43 / Type E3).